Consider the following 907-residue polypeptide: MKGSNRNKDHSTEGEGDGKRPKRKCLQWHPLLAKKLLDFSEEEEEDEEEEDIDKVQLLEADGLEQDVAETEDDESPEQRARRPMNAFLLFCKRHRSLVRQEHPRLDNRGATKILADWWAVLDPKEKQKYTDMAKEYKDAFMKANPGYRWCPTTNKPVKSPTPTVNPRKKLWAFPPDSSRDLPTPKKAKTEVPQLNFGMADPTQMGGLSMLLLAGEHALGTPEASSGTCRPDISESPELRQKSPLFQFAEISSRTSHPDAPSKQCQASALFQFAEISSSTSQLGGTEPVKRCGNSALFQLAEMCLASEGVKMEDTKLIKSKESDGGRIEEIEKGKEERGTEVEKTTETSFQKEAEFGKSAKGNVRESKDLRDIEQLQMDNVMAIKVEDPKEIRKEPEDDQKYSHFPDFSYSASSKIIISGVPSRKDHMCHPHGIMIIEDPTTLNKPEKIKKKKKKNKLDRHGNDKSTPKKTCKKRQSSESDIESVMYTIEAVAKGDWGVDKLGETPRKKVRPSSSGKGGILDAKPPKKKVKSKEKKVSKEKCSDITKESRPPDFLSISASKSVPGEVPEGIKAEPLTPTEDALPPSLPGQAKPEDSDCHRKTETCGSRKSERSCKGALYKTLVSEGMLTSLRANVDRGKRSSGKGNSSDHEGCWSEESWTFNQSGTSGSKKFKKKLREDSFLGSAKLDEEFEKKFNSLPQYSPITFDRKCVSTPRKKKKTGNMSSESTKTSKGSGDKWSHKQFFLDAIHPTEAIFSEDKSTTEPAFKVKNALSIPNTPEPTTMQEPLVGSQKRKARKTKITHLVRTADGRVSPAGGTLDDKPKEQLQRSLPKVPGTYCGDNCSHSTVEEPRSSTPDMPAVSAFFSLAALAEVAAMENVHRGQRSTPLTHDGQPKEMPQAPVLISCADQ.

Residues 1-19 (MKGSNRNKDHSTEGEGDGK) are compositionally biased toward basic and acidic residues. Disordered stretches follow at residues 1–24 (MKGS…PKRK), 37–80 (LDFS…EQRA), 152–185 (TTNK…PTPK), and 220–242 (TPEA…RQKS). Acidic residues-rich tracts occupy residues 39–52 (FSEE…EEDI) and 61–75 (DGLE…DDES). A DNA-binding region (HMG box) is located at residues 80 to 148 (ARRPMNAFLL…AFMKANPGYR (69 aa)). Over residues 152-164 (TTNKPVKSPTPTV) the composition is skewed to polar residues. Residue Ser-242 is modified to Phosphoserine. Lys-384 is covalently cross-linked (Glycyl lysine isopeptide (Lys-Gly) (interchain with G-Cter in SUMO2)). Disordered stretches follow at residues 435-483 (IIED…DIES), 495-612 (DWGV…SERS), and 628-672 (TSLR…KKFK). Basic residues predominate over residues 447 to 457 (KIKKKKKKNKL). A phosphoserine mark is found at Ser-476 and Ser-483. Basic and acidic residues-rich tracts occupy residues 496-506 (WGVDKLGETPR) and 534-550 (KKVS…ESRP). Lys-571 participates in a covalent cross-link: Glycyl lysine isopeptide (Lys-Gly) (interchain with G-Cter in SUMO2). Basic and acidic residues predominate over residues 591 to 612 (KPEDSDCHRKTETCGSRKSERS). The span at 656-668 (ESWTFNQSGTSGS) shows a compositional bias: polar residues. Lys-693 is covalently cross-linked (Glycyl lysine isopeptide (Lys-Gly) (interchain with G-Cter in SUMO2)). Ser-701 bears the Phosphoserine mark. Disordered stretches follow at residues 708 to 736 (KCVS…SGDK), 769 to 854 (NALS…SSTP), and 877 to 907 (VHRG…CADQ). A compositionally biased stretch (low complexity) spans 723–732 (SSESTKTSKG). The segment covering 772–783 (SIPNTPEPTTMQ) has biased composition (polar residues). Residue Ser-789 is modified to Phosphoserine. Residues 790–801 (QKRKARKTKITH) are compositionally biased toward basic residues. The residue at position 811 (Ser-811) is a Phosphoserine.

The protein localises to the nucleus. Functionally, transcription factor that is necessary for cell cycle progression from G1 to S phase. This chain is HMG box transcription factor BBX (Bbx), found in Mus musculus (Mouse).